Reading from the N-terminus, the 79-residue chain is Cell division protein ZapB (79 aa).

Positions 6-78 form a coiled coil; that stretch reads FEKLEVKVQQ…LRALLGKMEE (73 aa).

The protein belongs to the ZapB family. In terms of assembly, homodimer. The ends of the coiled-coil dimer bind to each other, forming polymers. Interacts with FtsZ.

Its subcellular location is the cytoplasm. In terms of biological role, non-essential, abundant cell division factor that is required for proper Z-ring formation. It is recruited early to the divisome by direct interaction with FtsZ, stimulating Z-ring assembly and thereby promoting cell division earlier in the cell cycle. Its recruitment to the Z-ring requires functional FtsA or ZipA. The polypeptide is Cell division protein ZapB (Yersinia pseudotuberculosis serotype O:1b (strain IP 31758)).